The following is a 76-amino-acid chain: ATP synthase subunit 9, mitochondrial (76 aa).

2 consecutive transmembrane segments (helical) span residues 14 to 34 (ISTI…AALI) and 56 to 76 (ALSE…LFAV).

This sequence belongs to the ATPase C chain family. In terms of assembly, F-type ATPases have 2 components, CF(1) - the catalytic core - and CF(0) - the membrane proton channel. CF(1) has five subunits: alpha(3), beta(3), gamma(1), delta(1), epsilon(1). CF(0) has three main subunits: a, b and c.

The protein resides in the mitochondrion membrane. Its function is as follows. Mitochondrial membrane ATP synthase (F(1)F(0) ATP synthase or Complex V) produces ATP from ADP in the presence of a proton gradient across the membrane which is generated by electron transport complexes of the respiratory chain. F-type ATPases consist of two structural domains, F(1) - containing the extramembraneous catalytic core and F(0) - containing the membrane proton channel, linked together by a central stalk and a peripheral stalk. During catalysis, ATP synthesis in the catalytic domain of F(1) is coupled via a rotary mechanism of the central stalk subunits to proton translocation. Part of the complex F(0) domain. A homomeric c-ring of probably 10 subunits is part of the complex rotary element. The sequence is that of ATP synthase subunit 9, mitochondrial (ATP9) from Candida glabrata (strain ATCC 2001 / BCRC 20586 / JCM 3761 / NBRC 0622 / NRRL Y-65 / CBS 138) (Yeast).